The primary structure comprises 273 residues: Cytosolic sulfotransferase 4 (273 aa).

74-79 (KCGTTW) contacts 3'-phosphoadenylyl sulfate. His121 (proton acceptor) is an active-site residue. 3'-phosphoadenylyl sulfate is bound by residues Arg143 and 239 to 241 (RKG).

This sequence belongs to the sulfotransferase 1 family.

The protein resides in the cytoplasm. In terms of biological role, sulfotransferase that utilizes 3'-phospho-5'-adenylyl sulfate (PAPS) as sulfonate donor. This chain is Cytosolic sulfotransferase 4 (SOT4), found in Arabidopsis thaliana (Mouse-ear cress).